A 465-amino-acid polypeptide reads, in one-letter code: UDP-N-acetylmuramoylalanine--D-glutamate ligase (465 aa).

An ATP-binding site is contributed by 127–133; the sequence is GSNGKST.

It belongs to the MurCDEF family.

The protein localises to the cytoplasm. The enzyme catalyses UDP-N-acetyl-alpha-D-muramoyl-L-alanine + D-glutamate + ATP = UDP-N-acetyl-alpha-D-muramoyl-L-alanyl-D-glutamate + ADP + phosphate + H(+). Its pathway is cell wall biogenesis; peptidoglycan biosynthesis. In terms of biological role, cell wall formation. Catalyzes the addition of glutamate to the nucleotide precursor UDP-N-acetylmuramoyl-L-alanine (UMA). This is UDP-N-acetylmuramoylalanine--D-glutamate ligase from Cereibacter sphaeroides (strain ATCC 17023 / DSM 158 / JCM 6121 / CCUG 31486 / LMG 2827 / NBRC 12203 / NCIMB 8253 / ATH 2.4.1.) (Rhodobacter sphaeroides).